An 892-amino-acid polypeptide reads, in one-letter code: Alanine--tRNA ligase (892 aa).

4 residues coordinate Zn(2+): histidine 574, histidine 578, cysteine 677, and histidine 681.

Belongs to the class-II aminoacyl-tRNA synthetase family. It depends on Zn(2+) as a cofactor.

The protein resides in the cytoplasm. The catalysed reaction is tRNA(Ala) + L-alanine + ATP = L-alanyl-tRNA(Ala) + AMP + diphosphate. Functionally, catalyzes the attachment of alanine to tRNA(Ala) in a two-step reaction: alanine is first activated by ATP to form Ala-AMP and then transferred to the acceptor end of tRNA(Ala). Also edits incorrectly charged Ser-tRNA(Ala) and Gly-tRNA(Ala) via its editing domain. The protein is Alanine--tRNA ligase of Mesoplasma florum (strain ATCC 33453 / NBRC 100688 / NCTC 11704 / L1) (Acholeplasma florum).